Here is a 463-residue protein sequence, read N- to C-terminus: Putative sodium-coupled neutral amino acid transporter 11 (463 aa).

The disordered stretch occupies residues 1-27 (MGYPGQRPVIPPQSHRDDRETLVSEHK). Basic and acidic residues predominate over residues 14-25 (SHRDDRETLVSE). 11 consecutive transmembrane segments (helical) span residues 38-58 (AVFN…PYSM), 65-85 (LGIL…ILLI), 105-125 (GFPG…IAMI), 150-170 (LLIG…LPLS), 178-198 (LGKI…IVVA), 225-245 (VGVM…YGSL), 256-276 (IIHV…TCGY), 298-320 (VTFG…CFVT), 336-356 (VCHI…SLLI), 358-378 (CLGI…IFII), and 397-417 (IMSC…FVMA). 3 N-linked (GlcNAc...) asparagine glycosylation sites follow: Asn-437, Asn-442, and Asn-458.

The protein belongs to the amino acid/polyamine transporter 2 family.

Its subcellular location is the membrane. Its function is as follows. Putative sodium-dependent amino acid/proton antiporter. The sequence is that of Putative sodium-coupled neutral amino acid transporter 11 (SLC38A11) from Bos taurus (Bovine).